The chain runs to 239 residues: Short palate, lung and nasal epithelium carcinoma-associated protein 2A (239 aa).

The signal sequence occupies residues 1–20 (MVQLWKLVLLCGLLAGTSES). Cys-166 and Cys-209 are joined by a disulfide.

The protein belongs to the BPI/LBP/Plunc superfamily. Plunc family. In terms of tissue distribution, detected in salivary tissues: parotid, submandibular and sublingual glands.

The protein localises to the secreted. This is Short palate, lung and nasal epithelium carcinoma-associated protein 2A (SPLUNC2A) from Bos taurus (Bovine).